Reading from the N-terminus, the 207-residue chain is Putative 3-methyladenine DNA glycosylase (207 aa).

The protein belongs to the DNA glycosylase MPG family.

The sequence is that of Putative 3-methyladenine DNA glycosylase from Burkholderia orbicola (strain MC0-3).